Reading from the N-terminus, the 415-residue chain is Esterase FrsA (415 aa).

The protein belongs to the FrsA family.

The enzyme catalyses a carboxylic ester + H2O = an alcohol + a carboxylate + H(+). Catalyzes the hydrolysis of esters. This is Esterase FrsA from Serratia proteamaculans (strain 568).